Consider the following 357-residue polypeptide: Elongation factor Ts (357 aa).

The involved in Mg(2+) ion dislocation from EF-Tu stretch occupies residues 82-85 (TDFV).

This sequence belongs to the EF-Ts family.

It localises to the cytoplasm. Functionally, associates with the EF-Tu.GDP complex and induces the exchange of GDP to GTP. It remains bound to the aminoacyl-tRNA.EF-Tu.GTP complex up to the GTP hydrolysis stage on the ribosome. The protein is Elongation factor Ts of Campylobacter jejuni subsp. jejuni serotype O:2 (strain ATCC 700819 / NCTC 11168).